Consider the following 217-residue polypeptide: Vesicle transport through interaction with t-SNAREs homolog 1A (217 aa).

At methionine 1 to arginine 192 the chain is on the cytoplasmic side. Coiled-coil stretches lie at residues proline 31–arginine 92 and glutamate 112–serine 178. The helical transmembrane segment at isoleucine 193 to serine 213 threads the bilayer. Residues valine 214–histidine 217 lie on the Extracellular side of the membrane.

It belongs to the VTI1 family. Interacts with distinct SNARE complexes that contain either STX5 or STX6. Interacts with NAPA and, to a lesser extent, with NAPG. Identified in a complex containing STX6, STX12, VAMP4 and VTI1A.

The protein localises to the cytoplasmic vesicle. Its subcellular location is the golgi apparatus membrane. Its function is as follows. V-SNARE that mediates vesicle transport pathways through interactions with t-SNAREs on the target membrane. These interactions are proposed to mediate aspects of the specificity of vesicle trafficking and to promote fusion of the lipid bilayers. Involved in vesicular transport from the late endosomes to the trans-Golgi network. Along with VAMP7, involved in an non-conventional RAB1-dependent traffic route to the cell surface used by KCNIP1 and KCND2. May be involved in increased cytokine secretion associated with cellular senescence. This is Vesicle transport through interaction with t-SNAREs homolog 1A (VTI1A) from Homo sapiens (Human).